Reading from the N-terminus, the 484-residue chain is Phospholipase A1-Ialpha2, chloroplastic (484 aa).

Residues 1–63 (MALIQNPNMK…LAPVILNSPV (63 aa)) constitute a chloroplast transit peptide. The GXSXG signature appears at 295-299 (GHSMG). The active-site Acyl-ester intermediate is S297. Catalysis depends on charge relay system residues D360 and H411.

This sequence belongs to the AB hydrolase superfamily. Lipase family. Ubiquitous. Highest expression in flowers and leaves.

The protein resides in the plastid. It is found in the chloroplast. The protein localises to the plastoglobule. The enzyme catalyses a 1,2-diacyl-3-O-[alpha-D-galactosyl-(1-&gt;6)-beta-D-galactosyl]-sn-glycerol + H2O = acyl-3-O-[alpha-D-galactosyl-(1-&gt;6)-beta-D-galactosyl]-sn-glycerol + a fatty acid + H(+). The catalysed reaction is a 1,2-diacyl-3-O-(beta-D-galactosyl)-sn-glycerol + H2O = an acyl-3-O-(beta-D-galactosyl)-sn-glycerol + a fatty acid + H(+). Its function is as follows. Acylhydrolase that catalyzes the hydrolysis of phosphatidylcholine at the sn-1 position. Has a strong galactolipase activity toward monogalactosyldiacylglycerol (MGDG) and digalactosyldiacylglycerol (DGDG). Low triacylglycerol (TAG) lipase activity. Plays a role in plant growth and in leaf senescence. This chain is Phospholipase A1-Ialpha2, chloroplastic, found in Arabidopsis thaliana (Mouse-ear cress).